A 485-amino-acid polypeptide reads, in one-letter code: Glutamate mutase epsilon subunit (485 aa).

R100 is an L-glutamate binding site. N123 contacts adenosylcob(III)alamin. L-glutamate is bound by residues K149–H150 and D171. 4 residues coordinate adenosylcob(III)alamin: P180, F297, K326, and E330.

This sequence belongs to the methylaspartate mutase GlmE subunit family. As to quaternary structure, heterotetramer composed of 2 epsilon subunits (GlmE) and 2 sigma subunits (GlmS). GlmE exists as a homodimer and GlmS as a monomer. The cofactor is adenosylcob(III)alamin.

It carries out the reaction (2S,3S)-3-methyl-L-aspartate = L-glutamate. It participates in amino-acid degradation; L-glutamate degradation via mesaconate pathway; acetate and pyruvate from L-glutamate: step 1/4. Functionally, catalyzes the carbon skeleton rearrangement of L-glutamate to L-threo-3-methylaspartate ((2S,3S)-3-methylaspartate). This is Glutamate mutase epsilon subunit from Fusobacterium nucleatum subsp. nucleatum (strain ATCC 25586 / DSM 15643 / BCRC 10681 / CIP 101130 / JCM 8532 / KCTC 2640 / LMG 13131 / VPI 4355).